A 209-amino-acid chain; its full sequence is Large ribosomal subunit protein uL3 (209 aa).

Residues 126–148 form a disordered region; sequence HGQSRGPMAHGSRYHRRPGSMGP.

This sequence belongs to the universal ribosomal protein uL3 family. Part of the 50S ribosomal subunit. Forms a cluster with proteins L14 and L19.

Functionally, one of the primary rRNA binding proteins, it binds directly near the 3'-end of the 23S rRNA, where it nucleates assembly of the 50S subunit. In Listeria innocua serovar 6a (strain ATCC BAA-680 / CLIP 11262), this protein is Large ribosomal subunit protein uL3.